We begin with the raw amino-acid sequence, 103 residues long: MYAVFQSGGKQHRVSEGQIVRLEKLEAATGDVVEFDQVLMVSDGNDVNIGAPFVSGGKVKAEVIDHGRGDKIKIVKFRRRKHSRRQQGHRQWFTEVKITGINS.

Belongs to the bacterial ribosomal protein bL21 family. As to quaternary structure, part of the 50S ribosomal subunit. Contacts protein L20.

Its function is as follows. This protein binds to 23S rRNA in the presence of protein L20. This chain is Large ribosomal subunit protein bL21, found in Idiomarina loihiensis (strain ATCC BAA-735 / DSM 15497 / L2-TR).